The sequence spans 86 residues: MASKALLLFVMLTFLLVIEMEGRILRVNSKTKDGESNDLLKRLGYNVSELKRIGRELSVQNEVDRFSPGGPDPQHHSYPLSSKPRI.

Positions 1-22 are cleaved as a signal peptide; the sequence is MASKALLLFVMLTFLLVIEMEG. N-linked (GlcNAc...) asparagine glycosylation is present at N46. The interval 63-86 is disordered; the sequence is VDRFSPGGPDPQHHSYPLSSKPRI. Residues P68 and P71 each carry the hydroxyproline modification. O-linked (Ara...) hydroxyproline glycosylation is present at P71.

This sequence belongs to the CLV3/ESR signal peptide family. In terms of processing, the O-glycosylation (arabinosylation) of the hydroxyproline Pro-71 enhances binding affinity of the CLE7p peptide for its receptor. Expressed in roots and seedlings.

Its subcellular location is the secreted. It localises to the extracellular space. Extracellular signal peptide that regulates cell fate. This is CLAVATA3/ESR (CLE)-related protein 7 from Arabidopsis thaliana (Mouse-ear cress).